The chain runs to 277 residues: SF-assemblin (277 aa).

Residues 1-20 (MATSGMVSPTSGRPFSPMRS) form a disordered region. The tract at residues 1–27 (MATSGMVSPTSGRPFSPMRSSVLTTTG) is nonhelical region. A rod region spans residues 28–277 (SAIKLEHVSE…KMVNMQHNSA (250 aa)). Residues 70-90 (RLEKSMEAEVKRRAESDKQLQ) adopt a coiled-coil conformation.

It belongs to the SF-assemblin family. The N-terminus is blocked.

The protein resides in the cytoplasm. It is found in the cytoskeleton. Functionally, major component of the striated microtubule-associated fibers (SMAFs; system-I-fibers). The sequence is that of SF-assemblin from Dunaliella bioculata (Green alga).